The primary structure comprises 714 residues: RB-associated KRAB zinc finger protein (714 aa).

Residues 8-79 (VSFKDVAVDF…GGEFPCQHSP (72 aa)) form the KRAB domain. Glycyl lysine isopeptide (Lys-Gly) (interchain with G-Cter in SUMO2) cross-links involve residues lysine 97 and lysine 259. Residues 171 to 260 (TYHGEKMCEF…YQRSQMEMKP (90 aa)) form a required for interaction with RB1 region. C2H2-type zinc fingers lie at residues 261 to 283 (FECS…QRAH) and 289 to 311 (YECN…RRSH). Lysine 315 is covalently cross-linked (Glycyl lysine isopeptide (Lys-Gly) (interchain with G-Cter in SUMO2)). 7 C2H2-type zinc fingers span residues 317–339 (YKCN…LRTH), 345–367 (YECS…QRNH), 373–395 (YPCN…QRTH), 401–423 (YKCN…QRTH), 429–451 (YQCS…YRSH), 457–479 (YECN…RKVH), and 485–505 (HECS…HTAH). Lysine 357 is covalently cross-linked (Glycyl lysine isopeptide (Lys-Gly) (interchain with G-Cter in SUMO2)). Residues 417-714 (ITHQRTHTGE…NMNVLDVENL (298 aa)) form an interaction with AR region. A C2H2-type 10; degenerate zinc finger spans residues 511 to 533 (YECNECGKTFLVNSAFDGHQPLP). Residues lysine 534 and lysine 537 each participate in a glycyl lysine isopeptide (Lys-Gly) (interchain with G-Cter in SUMO2) cross-link. 6 consecutive C2H2-type zinc fingers follow at residues 539–561 (YECN…YRSH), 567–589 (YGCS…QRVH), 595–617 (YECY…HRIH), 623–645 (YECS…YRSH), 651–673 (YECN…YRTH), and 679–701 (YECN…QRIH).

This sequence belongs to the krueppel C2H2-type zinc-finger protein family. In terms of assembly, interacts with AR and RB1. May also interact with other nuclear hormone receptors such as NR3C1/GR. Expressed in bone, brain, heart, kidney, liver, lung, pancreas and placenta.

The protein localises to the nucleus. In terms of biological role, may repress E2F-dependent transcription. May promote AR-dependent transcription. This is RB-associated KRAB zinc finger protein (RBAK) from Homo sapiens (Human).